Reading from the N-terminus, the 105-residue chain is UPF0235 protein RT0827 (105 aa).

The protein belongs to the UPF0235 family.

This Rickettsia typhi (strain ATCC VR-144 / Wilmington) protein is UPF0235 protein RT0827.